The sequence spans 178 residues: Bifunctional protein PyrR (178 aa).

Positions 99 to 111 (IILVDDVLFTGRT) match the PRPP-binding motif.

It belongs to the purine/pyrimidine phosphoribosyltransferase family. PyrR subfamily. Homodimer and homohexamer; in equilibrium.

It carries out the reaction UMP + diphosphate = 5-phospho-alpha-D-ribose 1-diphosphate + uracil. Its function is as follows. Regulates transcriptional attenuation of the pyrimidine nucleotide (pyr) operon by binding in a uridine-dependent manner to specific sites on pyr mRNA. This disrupts an antiterminator hairpin in the RNA and favors formation of a downstream transcription terminator, leading to a reduced expression of downstream genes. Also displays a weak uracil phosphoribosyltransferase activity which is not physiologically significant. The polypeptide is Bifunctional protein PyrR (Clostridium novyi (strain NT)).